The primary structure comprises 125 residues: Large ribosomal subunit protein bL12 (125 aa).

It belongs to the bacterial ribosomal protein bL12 family. As to quaternary structure, homodimer. Part of the ribosomal stalk of the 50S ribosomal subunit. Forms a multimeric L10(L12)X complex, where L10 forms an elongated spine to which 2 to 4 L12 dimers bind in a sequential fashion. Binds GTP-bound translation factors.

Functionally, forms part of the ribosomal stalk which helps the ribosome interact with GTP-bound translation factors. Is thus essential for accurate translation. The sequence is that of Large ribosomal subunit protein bL12 from Thermus thermophilus (strain ATCC BAA-163 / DSM 7039 / HB27).